The following is a 178-amino-acid chain: Caveolin-1 (178 aa).

S2 is subject to N-acetylserine. Residue S2 is modified to Phosphoserine. The tract at residues 2-94 is required for homooligomerization; that stretch reads SGGKYVDSEG…WKASFTTFTV (93 aa). Topologically, residues 2–104 are cytoplasmic; that stretch reads SGGKYVDSEG…TKYWFYRLLS (103 aa). N6-acetyllysine; alternate is present on K5. K5 is covalently cross-linked (Glycyl lysine isopeptide (Lys-Gly) (interchain with G-Cter in ubiquitin); alternate). Position 6 is a phosphotyrosine (Y6). S9 is subject to Phosphoserine. At Y14 the chain carries Phosphotyrosine; by ABL1. Y25 carries the phosphotyrosine modification. Glycyl lysine isopeptide (Lys-Gly) (interchain with G-Cter in ubiquitin) cross-links involve residues K26 and K30. Phosphoserine is present on S37. Glycyl lysine isopeptide (Lys-Gly) (interchain with G-Cter in ubiquitin) cross-links involve residues K39, K47, and K57. Residues 82 to 94 are interaction with CAVIN3; that stretch reads DGIWKASFTTFTV. The segment at residues 105–125 is an intramembrane region (helical); that stretch reads ALFGIPMALVWGIYFAILSFL. Residues 126–178 lie on the Cytoplasmic side of the membrane; sequence HIWAVVPCIKSFLIEIQCISRVYSIYVHTVCDPLFEAVGKIFSNVRINLQKEI. Residues 131-142 form an interacts with SPRY1, SPRY2, SPRY3 and SPRY4 region; it reads VPCIKSFLIEIQ. 3 S-palmitoyl cysteine lipidation sites follow: C133, C143, and C156. The interacts with SPRY1, SPRY2, and SPRY4 stretch occupies residues 149 to 160; it reads SIYVHTVCDPLF. The segment at 167 to 178 is interacts with SPRY1, SPRY2, SPRY3 and SPRY4; it reads FSNVRINLQKEI.

Belongs to the caveolin family. As to quaternary structure, homooligomer. Interacts with GLIPR2. Interacts with NOSTRIN. Interacts with SNAP25 and STX1A. Interacts (via the N-terminus) with DPP4; the interaction is direct. Interacts with CTNNB1, CDH1 and JUP. Interacts with PACSIN2; this interaction induces membrane tubulation. Interacts with SLC7A9. Interacts with BMX and BTK. Interacts with TGFBR1. Interacts with CAVIN3 (via leucine-zipper domain) in a cholesterol-sensitive manner. Interacts with CAVIN1. Interacts with EHD2 in a cholesterol-dependent manner. Forms a ternary complex with UBXN6 and VCP; mediates CAV1 targeting to lysosomes for degradation. Interacts with ABCG1; this interaction regulates ABCG1-mediated cholesterol efflux. Interacts with NEU3; this interaction enhances NEU3 sialidase activity within caveola. Interacts (via C-terminus) with SPRY1, SPRY2 (via C-terminus), SPRY3, and SPRY4. Interacts with IGFBP5; this interaction allows trafficking of IGFBP5 from the plasma membrane to the nucleus. In terms of processing, phosphorylated at Tyr-14 by ABL1 in response to oxidative stress. Ubiquitinated. Undergo monoubiquitination and multi- and/or polyubiquitination. Monoubiquitination of N-terminal lysines promotes integration in a ternary complex with UBXN6 and VCP which promotes oligomeric CAV1 targeting to lysosomes for degradation. Ubiquitinated by ZNRF1; leading to degradation and modulation of the TLR4-mediated immune response.

The protein localises to the golgi apparatus membrane. The protein resides in the cell membrane. It is found in the membrane. It localises to the caveola. Its subcellular location is the membrane raft. In terms of biological role, may act as a scaffolding protein within caveolar membranes. Forms a stable heterooligomeric complex with CAV2 that targets to lipid rafts and drives caveolae formation. Mediates the recruitment of CAVIN proteins (CAVIN1/2/3/4) to the caveolae. Interacts directly with G-protein alpha subunits and can functionally regulate their activity. Involved in the costimulatory signal essential for T-cell receptor (TCR)-mediated T-cell activation. Its binding to DPP4 induces T-cell proliferation and NF-kappa-B activation in a T-cell receptor/CD3-dependent manner. Recruits CTNNB1 to caveolar membranes and may regulate CTNNB1-mediated signaling through the Wnt pathway. Negatively regulates TGFB1-mediated activation of SMAD2/3 by mediating the internalization of TGFBR1 from membrane rafts leading to its subsequent degradation. Binds 20(S)-hydroxycholesterol (20(S)-OHC). The polypeptide is Caveolin-1 (CAV1) (Papio anubis (Olive baboon)).